We begin with the raw amino-acid sequence, 318 residues long: uncharacterized protein (318 aa).

It to A.aeolicus AA07 and AA11.

This is an uncharacterized protein from Aquifex aeolicus (strain VF5).